The following is a 263-amino-acid chain: 3-methyl-2-oxobutanoate hydroxymethyltransferase (263 aa).

Residues aspartate 43 and aspartate 82 each contribute to the Mg(2+) site. 3-methyl-2-oxobutanoate-binding positions include 43 to 44 (DS), aspartate 82, and lysine 111. Glutamate 113 is a Mg(2+) binding site. Glutamate 179 functions as the Proton acceptor in the catalytic mechanism.

It belongs to the PanB family. As to quaternary structure, homodecamer; pentamer of dimers. Mg(2+) is required as a cofactor.

It localises to the cytoplasm. The catalysed reaction is 3-methyl-2-oxobutanoate + (6R)-5,10-methylene-5,6,7,8-tetrahydrofolate + H2O = 2-dehydropantoate + (6S)-5,6,7,8-tetrahydrofolate. Its pathway is cofactor biosynthesis; (R)-pantothenate biosynthesis; (R)-pantoate from 3-methyl-2-oxobutanoate: step 1/2. Catalyzes the reversible reaction in which hydroxymethyl group from 5,10-methylenetetrahydrofolate is transferred onto alpha-ketoisovalerate to form ketopantoate. This is 3-methyl-2-oxobutanoate hydroxymethyltransferase from Neisseria meningitidis serogroup B (strain ATCC BAA-335 / MC58).